A 487-amino-acid polypeptide reads, in one-letter code: Glycogen synthase (487 aa).

Residue lysine 15 coordinates ADP-alpha-D-glucose.

This sequence belongs to the glycosyltransferase 1 family. Bacterial/plant glycogen synthase subfamily.

It carries out the reaction [(1-&gt;4)-alpha-D-glucosyl](n) + ADP-alpha-D-glucose = [(1-&gt;4)-alpha-D-glucosyl](n+1) + ADP + H(+). Its pathway is glycan biosynthesis; glycogen biosynthesis. Synthesizes alpha-1,4-glucan chains using ADP-glucose. The protein is Glycogen synthase of Leptothrix cholodnii (strain ATCC 51168 / LMG 8142 / SP-6) (Leptothrix discophora (strain SP-6)).